A 143-amino-acid chain; its full sequence is Fluoride-specific ion channel FluC (143 aa).

The next 4 membrane-spanning stretches (helical) occupy residues 6–26 (CILV…VSVL), 38–58 (TILI…LTLA), 70–90 (LFVM…SLQT), and 103–123 (MVNV…GHVV). The Na(+) site is built by G78 and T81.

The protein belongs to the fluoride channel Fluc/FEX (TC 1.A.43) family.

The protein resides in the cell inner membrane. It catalyses the reaction fluoride(in) = fluoride(out). Its activity is regulated as follows. Na(+) is not transported, but it plays an essential structural role and its presence is essential for fluoride channel function. Fluoride-specific ion channel. Important for reducing fluoride concentration in the cell, thus reducing its toxicity. This is Fluoride-specific ion channel FluC from Methylobacterium radiotolerans (strain ATCC 27329 / DSM 1819 / JCM 2831 / NBRC 15690 / NCIMB 10815 / 0-1).